The primary structure comprises 174 residues: Co-chaperone protein HscB homolog (174 aa).

The region spanning 2–74 is the J domain; it reads NYFELFKFSP…IRRAEHLLSL (73 aa).

It belongs to the HscB family. In terms of assembly, interacts with HscA and stimulates its ATPase activity.

Functionally, co-chaperone involved in the maturation of iron-sulfur cluster-containing proteins. Seems to help targeting proteins to be folded toward HscA. The chain is Co-chaperone protein HscB homolog from Shewanella sp. (strain W3-18-1).